A 668-amino-acid polypeptide reads, in one-letter code: MAGNAYSDEVLGTTNWLKDKSNQEVFSFVFKNEDVQLNGKNIGWNSYRKELQEEELKSLQRGAETTWDQSEDMEWESSVDELTKKQVFIFDSLVKKCLFEVLSTKNIAPSDVTWFVQHEWGKDQGWHCHVLIGGKNFSQAQGKWWRRQLNVYWSRWLVTACSVQLSPAERIKLREIAEDQEWVTLLTYKHKQTKKDYTKCVCFGNMVAYYFLTKKKICTSPPRDGGYFLSSDSGWKTNFLKEGERHLVSKLYTDDMRPETVETTVTTAQETKRGRIQTKKEVSIKTTLKELVHKRVTSPEDWMMMQPDSYIEMMAQPGGENLLKNTLEICTLTLARTKTAFDLILEKAETSKLTNFLLADTRTCRIFAFHGWNYIKVCHAICCVLNRQGGKRNTVLFHGPASTGKSIIAQAIAQAVGNVGCYNAANVNFPFNDCTNKNLIWVEEAGNFGQQVNQFKAICSGQTIRIDQKGKGSKQIEPTPVIMTTNENITVVKIGCEERPEHTQPIRDRMLNIHLTHTLPGDFGLVDKNEWPMICAWLVKNGYQSTMASYCAKWGKVPDWTENWAEPKVTTEINSVGSTNSPSPKSTPLSQNYALTPSDLEDLALEPWSTPSTPVVGTVKTPNTGETGSTACQEAQRSPTWSEIEEDLRACFSSEHWKSDSEQLPNLD.

The tract at residues 1–276 (MAGNAYSDEV…TAQETKRGRI (276 aa)) is DNA-binding. A PV NS1-Nuc domain is found at 21 to 259 (SNQEVFSFVF…KLYTDDMRPE (239 aa)). A divalent metal cation is bound by residues glutamate 119, histidine 127, and histidine 129. An RCR-2 motif is present at residues 127 to 129 (HCH). Residues 191–195 (KQTKK) are ori-binding. Tyrosine 210 acts as the For nuclease activity in catalysis. The short motif at 210-214 (YFLTK) is the RCR-3 element. One can recognise an SF3 helicase domain in the interval 373–528 (NYIKVCHAIC…LPGDFGLVDK (156 aa)). Position 399 to 406 (399 to 406 (GPASTGKS)) interacts with ATP. The transactivation stretch occupies residues 543 to 668 (YQSTMASYCA…SDSEQLPNLD (126 aa)). Disordered regions lie at residues 571 to 592 (TEINSVGSTNSPSPKSTPLSQN) and 605 to 643 (LEPWSTPSTPVVGTVKTPNTGETGSTACQEAQRSPTWSE). Over residues 609-641 (STPSTPVVGTVKTPNTGETGSTACQEAQRSPTW) the composition is skewed to polar residues.

It belongs to the parvoviruses initiator protein NS1 family. In terms of assembly, homooligomer; when bound to DNA. Mg(2+) serves as cofactor. Phosphorylated.

The protein resides in the host nucleus. It catalyses the reaction ATP + H2O = ADP + phosphate + H(+). Functionally, multifunctional protein which displays endonuclease and helicase activities required for initiating and directing viral DNA replication. Also plays a role in viral packaging and transactivation of several promoters. Binds site-specifically to 2-3 approximate tandem copies within the origins of replication (Ori), unwinds this hairpin region and nicks one DNA strand thereby initiating the rolling circle replication (RCR). Cooperatively binds Ori with host PIF and probably other host factors, which activate the nickase function of NS1. Becomes covalently attached to the 5' end of the nick and provides a 3'OH for priming DNA synthesis. The helicase activity unwinds DNA in a 3'-5' direction on the longer strand. Inhibits the host cell cycle during the G1/S transition, the S-phase, and the G2/M transition. These arrests may provide essential cellular factors for viral DNA replication. Promotes apoptosis in host cell. This Parvovirus LuIII protein is Initiator protein NS1 (NS1).